Here is a 988-residue protein sequence, read N- to C-terminus: Next to BRCA1 gene 1 protein (988 aa).

The PB1 domain occupies Gln4 to Gly86. Residue Ser117 is modified to Phosphoserine. The segment at Met126–Lys150 is disordered. The ZZ-type zinc finger occupies Ser213–Val265. Zn(2+) contacts are provided by Cys218, Cys221, Cys232, Cys235, Cys241, Cys244, His251, and His255. 2 ATG8 family proteins-binding regions span residues Ala543 to Val637 and Ala745 to Glu756. Thr587 is modified (phosphothreonine). Phosphoserine is present on residues Ser591, Ser597, and Ser626. Residues Glu611–Leu644 are disordered. Disordered stretches follow at residues Met768–Pro822 and Arg841–Gly900. The span at Thr795–Gln807 shows a compositional bias: basic and acidic residues. A compositionally biased stretch (polar residues) spans Pro808–Pro822. The residue at position 860 (Ser860) is a Phosphoserine. A UBA domain is found at Ser935–Asn979.

Homooligomer and heterooligomer. Interacts with TRIM55. Interacts with titin/TTN. Interacts with RNF29, USP8, MAP1LC3A, MAP1LC3B, MAP1LC3C, GABARAP, GABARAPL1 and GABARAPL2. Binds to ubiquitin and ubiquitinated proteins. Interacts with SQSTM1. Interacts with TAX1BP1. Interacts with IRF3; this interaction mediates autophagic degradation of IRF3. Interacts with IL12A and IL12B. Post-translationally, phosphorylated by GSK3A; this phosphorylation inhibits NBR1 involvement in the formation of ubiquitinated protein aggregates. Expressed in brain.

Its subcellular location is the cytoplasm. The protein localises to the cytoplasmic vesicle. The protein resides in the autophagosome. It is found in the lysosome. It localises to the myofibril. Its subcellular location is the sarcomere. The protein localises to the m line. Its function is as follows. Ubiquitin-binding autophagy adapter that participates in different processes including host defense or intracellular homeostasis. Possesses a double function during the selective autophagy by acting as a shuttle bringing ubiquitinated proteins to autophagosomes and also by participating in the formation of protein aggregates. Plays a role in the regulation of the innate immune response by modulating type I interferon production and targeting ubiquitinated IRF3 for autophagic degradation. In response to oxidative stress, promotes an increase in SQSTM1 levels, phosphorylation, and body formation by preventing its autophagic degradation. In turn, activates the KEAP1-NRF2/NFE2L2 antioxidant pathway. Also plays non-autophagy role by mediating the shuttle of IL-12 to late endosome for subsequent secretion. This chain is Next to BRCA1 gene 1 protein (Nbr1), found in Mus musculus (Mouse).